The primary structure comprises 1267 residues: RNA-directed RNA polymerase lambda-3 (1267 aa).

One can recognise a RdRp catalytic domain in the interval 555–792 (LSPTSGSAVI…KLYFIFGCRI (238 aa)).

The protein belongs to the reoviridae RNA-directed RNA polymerase family.

The protein localises to the virion. The catalysed reaction is RNA(n) + a ribonucleoside 5'-triphosphate = RNA(n+1) + diphosphate. Functionally, RNA-directed RNA polymerase that is involved in transcription and genome replication. Following infection, it catalyzes the synthesis of fully conservative plus strands. After core assembly, which consists in recruitment of one capped plus-strand for each genomic segments and polymerase complexes, the polymerase switches mode and catalyzes the synthesis of complementary minus-strands. The polypeptide is RNA-directed RNA polymerase lambda-3 (L1) (Reovirus type 3 (strain Dearing) (T3D)).